Here is a 797-residue protein sequence, read N- to C-terminus: Hid-1 family protein P27G11.12 (797 aa).

This sequence belongs to the hid-1 family.

It localises to the cytoplasm. The protein localises to the nucleus. This is Hid-1 family protein P27G11.12 from Schizosaccharomyces pombe (strain 972 / ATCC 24843) (Fission yeast).